A 286-amino-acid chain; its full sequence is Pyridoxal kinase PdxY (286 aa).

Residues Ser-9 and 44 to 45 contribute to the substrate site; that span reads TQ. Positions 111, 148, and 181 each coordinate ATP. Asp-222 contributes to the substrate binding site.

Belongs to the pyridoxine kinase family. PdxY subfamily. Homodimer. The cofactor is Mg(2+).

It carries out the reaction pyridoxal + ATP = pyridoxal 5'-phosphate + ADP + H(+). It functions in the pathway cofactor metabolism; pyridoxal 5'-phosphate salvage; pyridoxal 5'-phosphate from pyridoxal: step 1/1. Functionally, pyridoxal kinase involved in the salvage pathway of pyridoxal 5'-phosphate (PLP). Catalyzes the phosphorylation of pyridoxal to PLP. This is Pyridoxal kinase PdxY from Actinobacillus succinogenes (strain ATCC 55618 / DSM 22257 / CCUG 43843 / 130Z).